The following is a 215-amino-acid chain: Sodium channel regulatory subunit beta-3 (215 aa).

The first 24 residues, 1-24 (MPAFNRLLPLASLVLIYWVRVCFP), serve as a signal peptide directing secretion. The 114-residue stretch at 25-138 (VCVEVPSETE…EAHRPFVKTT (114 aa)) folds into the Ig-like C2-type domain. Residues 25–156 (VCVEVPSETE…EEAGEDFTSV (132 aa)) are Extracellular-facing. 2 disulfide bridges follow: cysteine 26-cysteine 48 and cysteine 45-cysteine 120. Asparagine 95, asparagine 109, asparagine 113, and asparagine 121 each carry an N-linked (GlcNAc...) asparagine glycan. Residues 157–178 (VSEIMMYILLVFLTLWLFIEMI) form a helical membrane-spanning segment. Topologically, residues 179-215 (YCYRKVSKAEEAAQENASDYLAIPSENKENSVVPVEE) are cytoplasmic.

The protein belongs to the sodium channel auxiliary subunit SCN3B (TC 8.A.17) family. In terms of assembly, a voltage-gated sodium (Nav) channel consists of an ion-conducting pore-forming alpha subunit functional on its own that is regulated by one or more beta subunits. Forms homodimers and homotrimers. SCN3B is non-covalently associated with alpha subunits and induces the formation of alpha subunit oligomers, including trimers. Interacts with SCN5A/Nav1.5; regulatory subunit of SCN5A/Nav1.5. Interacts with SCN7A/Nav2.1; probable regulatory subunit of SCN7A/Nav2.1. Interacts with SCN10A; regulatory subunit of SCN10A/Nav1.8. Interacts with NFASC; probably involved in targeting the sodium channels to the nodes of Ranvier. Post-translationally, intramolecular disulfide bonds favor the voltage-gated sodium channel oligomeric complex assembly. N-glycosylated. In terms of tissue distribution, expressed broadly in neurons in the central and peripheral nervous systems, but not in glia and most non-neuronal cells. Weak detection in lung and adrenal gland.

It is found in the cell membrane. Functionally, regulatory subunit of multiple voltage-gated sodium (Nav) channels directly mediating the depolarization of excitable membranes. Navs, also called VGSCs (voltage-gated sodium channels) or VDSCs (voltage-dependent sodium channels), operate by switching between closed and open conformations depending on the voltage difference across the membrane. In the open conformation they allow Na(+) ions to selectively pass through the pore, along their electrochemical gradient. The influx of Na+ ions provokes membrane depolarization, initiating the propagation of electrical signals throughout cells and tissues. The accessory beta subunits participate in localization and functional modulation of the Nav channels. Voltage-gated sodium channels regulatory subunit that modulates channel gating kinetics. Modulates the activity of SCN2A/Nav1.2, causing a hyperpolarizing shift in the voltage-dependence of inactivation and increasing the fraction of channels operating in the fast gating mode. Also able to induce unique persistent SCN2A/Nav1.2-mediated sodium currents. Could modulate the activity of SCN10A/Nav1.8. The polypeptide is Sodium channel regulatory subunit beta-3 (Rattus norvegicus (Rat)).